The sequence spans 304 residues: HPr kinase/phosphorylase (304 aa).

Residues His136 and Lys157 contribute to the active site. ATP is bound at residue 151 to 158; that stretch reads GESGIGKS. Ser158 serves as a coordination point for Mg(2+). Residue Asp175 is the Proton acceptor; for phosphorylation activity. Proton donor; for dephosphorylation activity of the active site. The tract at residues 198–207 is important for the catalytic mechanism of both phosphorylation and dephosphorylation; that stretch reads LEVRGMGIID. Glu199 contacts Mg(2+). Arg240 is an active-site residue. An important for the catalytic mechanism of dephosphorylation region spans residues 261 to 266; the sequence is PIRPGR.

It belongs to the HPrK/P family. Homohexamer. It depends on Mg(2+) as a cofactor.

The enzyme catalyses [HPr protein]-L-serine + ATP = [HPr protein]-O-phospho-L-serine + ADP + H(+). The catalysed reaction is [HPr protein]-O-phospho-L-serine + phosphate + H(+) = [HPr protein]-L-serine + diphosphate. Catalyzes the ATP- as well as the pyrophosphate-dependent phosphorylation of a specific serine residue in HPr, a phosphocarrier protein of the phosphoenolpyruvate-dependent sugar phosphotransferase system (PTS). HprK/P also catalyzes the pyrophosphate-producing, inorganic phosphate-dependent dephosphorylation (phosphorolysis) of seryl-phosphorylated HPr (P-Ser-HPr). The two antagonistic activities of HprK/P are regulated by several intracellular metabolites, which change their concentration in response to the absence or presence of rapidly metabolisable carbon sources (glucose, fructose, etc.) in the growth medium. Therefore, by controlling the phosphorylation state of HPr, HPrK/P is a sensor enzyme that plays a major role in the regulation of carbon metabolism and sugar transport: it mediates carbon catabolite repression (CCR), and regulates PTS-catalyzed carbohydrate uptake and inducer exclusion. This chain is HPr kinase/phosphorylase, found in Clostridium acetobutylicum (strain ATCC 824 / DSM 792 / JCM 1419 / IAM 19013 / LMG 5710 / NBRC 13948 / NRRL B-527 / VKM B-1787 / 2291 / W).